We begin with the raw amino-acid sequence, 81 residues long: Sulfur carrier protein TusA (81 aa).

Cysteine 19 (cysteine persulfide intermediate) is an active-site residue.

The protein belongs to the sulfur carrier protein TusA family.

Its subcellular location is the cytoplasm. Sulfur carrier protein which probably makes part of a sulfur-relay system. The protein is Sulfur carrier protein TusA of Shewanella sp. (strain MR-4).